Consider the following 486-residue polypeptide: B-type cell cycle switch protein ccs52B (486 aa).

The short motif at arginine 24–serine 36 is the PEST motif element. The segment covering threonine 27–serine 36 has biased composition (polar residues). The tract at residues threonine 27–aspartate 57 is disordered. Residues serine 41–serine 53 show a composition bias toward low complexity. The C-box signature appears at aspartate 57–arginine 63. The CSM motif motif lies at alanine 87 to glycine 98. 7 WD repeats span residues glutamine 177 to leucine 214, glycine 218 to threonine 257, glycine 260 to glycine 297, glycine 301 to arginine 340, glutamate 343 to serine 385, aspartate 387 to threonine 428, and glycine 431 to alanine 470.

It belongs to the WD repeat CDC20/Fizzy family. Mostly expressed in shoot apices and, to a lower extent, in roots, especially in root tips, and in hypocotyls. Expressed in nodulation-competent root zone but not in the nodules.

It participates in protein modification; protein ubiquitination. Component of the anaphase promoting complex/cyclosome (APC/C), a cell cycle-regulated E3 ubiquitin-protein ligase complex that controls progression through mitosis and the G1 phase of the cell cycle. In Medicago truncatula (Barrel medic), this protein is B-type cell cycle switch protein ccs52B.